The primary structure comprises 317 residues: Acetyl-coenzyme A carboxylase carboxyl transferase subunit alpha (317 aa).

In terms of domain architecture, CoA carboxyltransferase C-terminal spans 40 to 293 (LEVRVREAIV…GDVIANALGE (254 aa)).

The protein belongs to the AccA family. Acetyl-CoA carboxylase is a heterohexamer composed of biotin carboxyl carrier protein (AccB), biotin carboxylase (AccC) and two subunits each of ACCase subunit alpha (AccA) and ACCase subunit beta (AccD).

The protein resides in the cytoplasm. It carries out the reaction N(6)-carboxybiotinyl-L-lysyl-[protein] + acetyl-CoA = N(6)-biotinyl-L-lysyl-[protein] + malonyl-CoA. Its pathway is lipid metabolism; malonyl-CoA biosynthesis; malonyl-CoA from acetyl-CoA: step 1/1. Its function is as follows. Component of the acetyl coenzyme A carboxylase (ACC) complex. First, biotin carboxylase catalyzes the carboxylation of biotin on its carrier protein (BCCP) and then the CO(2) group is transferred by the carboxyltransferase to acetyl-CoA to form malonyl-CoA. The polypeptide is Acetyl-coenzyme A carboxylase carboxyl transferase subunit alpha (Rhizobium etli (strain ATCC 51251 / DSM 11541 / JCM 21823 / NBRC 15573 / CFN 42)).